A 327-amino-acid chain; its full sequence is 1-aminocyclopropane-1-carboxylate oxidase 1 (327 aa).

The 101-residue stretch at 157–257 folds into the Fe2OG dioxygenase domain; sequence PTFGTKVSNY…RMSIASFYNP (101 aa). Residues His-181, Asp-183, and His-238 each contribute to the Fe cation site.

The protein belongs to the iron/ascorbate-dependent oxidoreductase family. Requires Fe cation as cofactor.

The enzyme catalyses 1-aminocyclopropane-1-carboxylate + L-ascorbate + O2 = ethene + L-dehydroascorbate + hydrogen cyanide + CO2 + 2 H2O. Its pathway is alkene biosynthesis; ethylene biosynthesis via S-adenosyl-L-methionine; ethylene from S-adenosyl-L-methionine: step 2/2. The chain is 1-aminocyclopropane-1-carboxylate oxidase 1 (ACO1) from Doritaenopsis sp. (Moth orchid).